We begin with the raw amino-acid sequence, 465 residues long: Protein dml1 (465 aa).

Position 446 is a phosphoserine (Ser446).

Belongs to the misato family.

It localises to the mitochondrion. Involved in the partitioning of the mitochondrial organelle and mitochondrial DNA (mtDNA) inheritance. The protein is Protein dml1 (dml1) of Schizosaccharomyces pombe (strain 972 / ATCC 24843) (Fission yeast).